A 226-amino-acid chain; its full sequence is Orotidine 5'-phosphate decarboxylase (226 aa).

Substrate contacts are provided by residues Asp-8, Lys-30, 58–67, Thr-117, Arg-177, Gln-186, Gly-206, and Arg-207; that span reads DLKLYDIPNT. The active-site Proton donor is Lys-60.

Belongs to the OMP decarboxylase family. Type 1 subfamily. In terms of assembly, homodimer.

The enzyme catalyses orotidine 5'-phosphate + H(+) = UMP + CO2. It participates in pyrimidine metabolism; UMP biosynthesis via de novo pathway; UMP from orotate: step 2/2. Functionally, catalyzes the decarboxylation of orotidine 5'-monophosphate (OMP) to uridine 5'-monophosphate (UMP). The sequence is that of Orotidine 5'-phosphate decarboxylase from Campylobacter concisus (strain 13826).